Here is a 113-residue protein sequence, read N- to C-terminus: U11-theraphotoxin-Hhn1a (113 aa).

Residues 1-21 (MNTVRVTFLLVFVLAVSLGQA) form the signal peptide. Residues 22–74 (DKDENRMEMQGKTEQGKSYLDFAENLLLQKLEELEAKLLEEDSEESRNSRQKR) constitute a propeptide that is removed on maturation. Disulfide bonds link Cys-75–Cys-90, Cys-82–Cys-95, and Cys-89–Cys-110.

Belongs to the neurotoxin 14 (magi-1) family. 01 (HNTX-16) subfamily. Expressed by the venom gland.

The protein localises to the secreted. In terms of biological role, probable ion channel inhibitor. The chain is U11-theraphotoxin-Hhn1a from Cyriopagopus hainanus (Chinese bird spider).